A 282-amino-acid polypeptide reads, in one-letter code: MAHQLKLLKDDFFASDQQAVAVADRYPQDVFAEHTHDFCELVIVWRGNGLHVLNDRPYRITRGDLFYIHADDKHSYASVNDLVLQNIIYCPERLKLNLDWQGAIPGFSASAGQPHWRLGSVGMAQARQVIGQLEHESSQHVPFANEMAELLFGQLVMLLNRHRYTSDSLPPTSSETLLDKLITRLAASLKSPFALDKFCDEASCSERVLRQQFRQQTGMTINQYLRQVRVCHAQYLLQHSRLLISDISTECGFEDSNYFSVVFTRETGMTPSQWRHLNSQKD.

One can recognise an HTH araC/xylS-type domain in the interval 179–277 (DKLITRLAAS…GMTPSQWRHL (99 aa)). 2 consecutive DNA-binding regions (H-T-H motif) follow at residues 196–217 (DKFCDEASCSERVLRQQFRQQT) and 244–267 (ISDISTECGFEDSNYFSVVFTRET).

In terms of assembly, binds DNA as a dimer.

It localises to the cytoplasm. Functionally, activates expression of the rhaSR operon in response to L-rhamnose. The protein is HTH-type transcriptional activator RhaR of Shigella flexneri serotype 5b (strain 8401).